Reading from the N-terminus, the 1010-residue chain is DENN domain-containing protein 1A (1010 aa).

The uDENN domain maps to 13-143 (FEVYIEVNRP…HGHPIPEPGT (131 aa)). The cDENN domain occupies 160–296 (ELPSIPENRN…VVSALKNRIR (137 aa)). Residues 298-375 (MSTTTGDGVA…DGRLDLLNSG (78 aa)) form the dDENN domain. An FXDXF motif motif is present at residues 378 to 382 (FSDVF). The segment at 455-554 (GFSTATEEPL…EATVKEPQST (100 aa)) is disordered. Basic and acidic residues predominate over residues 472 to 482 (IEKKRGEERRP). Over residues 493-502 (PRPHVPRRPK) the composition is skewed to basic residues. Residues 509–524 (SRTTAGSSPDQPQQYR) are compositionally biased toward polar residues. Over residues 538 to 548 (SPEKDSSEATV) the composition is skewed to basic and acidic residues. The Clathrin box signature appears at 560 to 569 (SLLEDIFSNL).

It is found in the cytoplasmic vesicle. The protein resides in the clathrin-coated vesicle membrane. The protein localises to the presynaptic cell membrane. Its function is as follows. Guanine nucleotide exchange factor (GEF) regulating clathrin-mediated endocytosis through RAB35 activation. Promotes the exchange of GDP to GTP, converting inactive GDP-bound RAB35 into its active GTP-bound form. Regulates clathrin-mediated endocytosis of synaptic vesicles and mediates exit from early endosomes. Binds phosphatidylinositol-phosphates (PtdInsPs), with some preference for PtdIns(3)P. The protein is DENN domain-containing protein 1A (dennd1a) of Xenopus laevis (African clawed frog).